We begin with the raw amino-acid sequence, 1137 residues long: Ribonucleoside-diphosphate reductase large subunit (1137 aa).

Positions 1–32 (MASRPAASSPVEARAPVGGQEAGGPSAATQGE) are disordered. An RIP homotypic interaction motif (RHIM) motif is present at residues 64–84 (SYRISDNNFVQCGSNCTMIID). Disordered stretches follow at residues 124–159 (GGTPRRSAGTSTGTQTADVPTEALGGPPPPPRFTLG) and 173–315 (AVFG…YPVP). A compositionally biased stretch (polar residues) spans 131–141 (AGTSTGTQTAD). The segment covering 196–206 (SDSDDSEDTDS) has biased composition (acidic residues). Over residues 281–290 (AGAGLAADPA) the composition is skewed to low complexity. The span at 291–304 (VARDDAEGLSDPRP) shows a compositional bias: basic and acidic residues. Residues T566, 581–582 (SC), G612, 791–795 (NLCTE), and 968–972 (PTAAS) contribute to the substrate site. A disulfide bridge connects residues C582 and C808. Catalysis depends on N791, which acts as the Proton acceptor. Catalysis depends on C793, which acts as the Cysteine radical intermediate. E795 (proton acceptor) is an active-site residue.

The protein belongs to the ribonucleoside diphosphate reductase large chain family. Heterotetramer composed of a homodimer of the large subunit (R1) and a homodimer of the small subunit (R2). Larger multisubunit protein complex are also active, composed of (R1)n(R2)n. Self-assembles (via RIP homotypic interaction motif/RHIM) into homomeric fibrillar amyloid structures. Interacts (via RHIM) with human RIPK1 (via RHIM). Interacts (via RHIM) with human RIPK3 (via RHIM); the interaction leads to heteromeric amyloid assemblies. Interacts (via RHIM) with human ZBP1 (via RHIM); the interaction leads to heteromeric amyloid assemblies. Interacts (via C-terminus) with host CASP8.

It carries out the reaction a 2'-deoxyribonucleoside 5'-diphosphate + [thioredoxin]-disulfide + H2O = a ribonucleoside 5'-diphosphate + [thioredoxin]-dithiol. Ribonucleoside-diphosphate reductase holoenzyme that provides the precursors necessary for viral DNA synthesis. Allows virus growth in non-dividing cells, as well as reactivation from latency in infected hosts. Catalyzes the biosynthesis of deoxyribonucleotides from the corresponding ribonucleotides. Prevents host necroptosis by targeting host RIPK1 and RIPK3, thereby hampering the formation of necroptotic RIPK1-RIPK3 complexes. Forms hetero-amyloid structures with host proteins RIPK3 or ZBP1 which may prevent RIPK3- and ZBP1-mediated necroptosis. In addition, inhibits extrinsic apoptosis by targeting host CASP8. This is Ribonucleoside-diphosphate reductase large subunit from Human herpesvirus 1 (strain 17) (HHV-1).